Consider the following 1292-residue polypeptide: Kinesin-like protein KIN-12A (1292 aa).

A disordered region spans residues 1 to 86; it reads MKKHFTLPRN…LSAETATESG (86 aa). Residues 19 to 29 show a composition bias toward low complexity; it reads PHSPNPSISKS. Residues 62-71 show a composition bias toward pro residues; that stretch reads PLPPRPPPSN. The region spanning 91-426 is the Kinesin motor domain; it reads GVKVIVRMKP…LRFAQRAKAI (336 aa). 165–172 provides a ligand contact to ATP; sequence GQTGSGKT. Microtubules-binding regions lie at residues 293–297, 326–332, and 375–379; these read SSRSH, VDLAGSE, and HIPYR. Positions 424 to 461 are neck; sequence KAIQNKAVVNEVMQDDVNFLRGVIHQLRDELQRMKNDG. Residues 677–724 are disordered; sequence SVSPTIRNSRKSLKTSELSTASQKDSEGENLVTEAADPSPATSKKMNN. 2 coiled-coil regions span residues 945–992 and 1047–1232; these read EVLK…CYID and SEEL…NQLV.

This sequence belongs to the TRAFAC class myosin-kinesin ATPase superfamily. Kinesin family. KIN-12 subfamily. Homodimer and heterodimer with KIN12B. Interacts with TIO.

It localises to the cytoplasm. Its subcellular location is the cytoskeleton. The protein resides in the phragmoplast. Plus-end directed kinesin-like motor enzyme that plays a critical role in the organization of phragmoplast microtubules during cytokinesis. Constitutes a signaling module in association with serine/threonine-protein kinase TIO that is required to support phragmoplast expansion and cell-plate growth in plant cells. Binds microtubules in an ATP-sensitive manner. This is Kinesin-like protein KIN-12A from Arabidopsis thaliana (Mouse-ear cress).